A 485-amino-acid polypeptide reads, in one-letter code: Adenosylhomocysteinase (485 aa).

Substrate is bound by residues Thr-64, Asp-139, and Glu-205. An NAD(+)-binding site is contributed by Thr-206 to Thr-208. Lys-235 and Asp-239 together coordinate substrate. Residues Asn-240, Gly-269–Gly-274, Glu-292, Asn-327, Ile-348–His-350, and Asn-397 each bind NAD(+).

The protein belongs to the adenosylhomocysteinase family. Homotetramer. Requires NAD(+) as cofactor. As to expression, mainly in floral buds and stems.

It carries out the reaction S-adenosyl-L-homocysteine + H2O = L-homocysteine + adenosine. Its pathway is amino-acid biosynthesis; L-homocysteine biosynthesis; L-homocysteine from S-adenosyl-L-homocysteine: step 1/1. Its function is as follows. Adenosylhomocysteine is a competitive inhibitor of S-adenosyl-L-methionine-dependent methyl transferase reactions; therefore adenosylhomocysteinase may play a key role in the control of methylations via regulation of the intracellular concentration of adenosylhomocysteine. The sequence is that of Adenosylhomocysteinase (SAHH) from Petroselinum crispum (Parsley).